A 372-amino-acid polypeptide reads, in one-letter code: Sesquiterpene synthase Agr9 (372 aa).

Residues Asp87, Asn225, Ser229, and Glu233 each contribute to the Mg(2+) site. Positions 87–91 (DEYTD) match the DDXXD motif motif. Positions 314 and 315 each coordinate (2E,6E)-farnesyl diphosphate.

The protein belongs to the terpene synthase family. The cofactor is Mg(2+).

The catalysed reaction is (2E,6E)-farnesyl diphosphate = gamma-muurolene + diphosphate. The enzyme catalyses (2E,6E)-farnesyl diphosphate = delta-cadinene + diphosphate. Terpene cyclase that catalyzes the cyclization of farnesyl diphosphate (FPP) to various sesquiterpenes, including gamma-muurolene, beta-cadinene and delta-cadinene. This chain is Sesquiterpene synthase Agr9, found in Cyclocybe aegerita (Black poplar mushroom).